The sequence spans 210 residues: Na(+)-translocating NADH-quinone reductase subunit D (210 aa).

Transmembrane regions (helical) follow at residues 42 to 62 (FVMT…VSLI), 72 to 92 (IIVQ…ILKA), 103 to 123 (VFVG…AFAM), 131 to 151 (FIDG…VGFF), and 178 to 198 (NGLM…IWAI).

The protein belongs to the NqrDE/RnfAE family. As to quaternary structure, composed of six subunits; NqrA, NqrB, NqrC, NqrD, NqrE and NqrF.

The protein resides in the cell inner membrane. The enzyme catalyses a ubiquinone + n Na(+)(in) + NADH + H(+) = a ubiquinol + n Na(+)(out) + NAD(+). NQR complex catalyzes the reduction of ubiquinone-1 to ubiquinol by two successive reactions, coupled with the transport of Na(+) ions from the cytoplasm to the periplasm. NqrA to NqrE are probably involved in the second step, the conversion of ubisemiquinone to ubiquinol. This is Na(+)-translocating NADH-quinone reductase subunit D from Vibrio cholerae serotype O1 (strain M66-2).